The sequence spans 605 residues: Hepatocyte nuclear factor 1-alpha-A (605 aa).

Residues 1–31 (MASQLSYLQRELLQALLESGVTKEALKKALA) are dimerization. One can recognise an HNF-p1 domain in the interval 1–32 (MASQLSYLQRELLQALLESGVTKEALKKALAD). Positions 57–81 (QLPNGLGESHISEDESSDDGEDFTP) are disordered. The 96-residue stretch at 85 to 180 (KELERLSPEE…IARLFTFTEF (96 aa)) folds into the POU-specific atypical domain. Interaction with DNA regions lie at residues 128 to 130 (QRE), 141 to 147 (HLSQHLN), 153 to 156 (KTQK), 206 to 209 (RFKW), 266 to 268 (RVY), and 273 to 276 (NRRK). A Nuclear localization signal motif is present at residues 200-208 (KKMRRNRFK). A DNA-binding region (homeobox; HNF1-type) is located at residues 202–282 (MRRNRFKWGP…NRRKEEAFRH (81 aa)). Over residues 321-335 (DRSAVMANSQSTPSP) the composition is skewed to polar residues. The disordered stretch occupies residues 321-343 (DRSAVMANSQSTPSPSALEPSHS). The interval 448 to 453 (PSHQLH) is not present in other members of the HNF1 family.

This sequence belongs to the HNF1 homeobox family. Binds DNA as dimer. Forms a homodimer or heterodimer with HNF1-alpha-B. Potentially also form a heterodimer with HNF1-beta. In terms of tissue distribution, protein expressed in liver, stomach, small intestine, colon and kidney. Not expressed in spleen, lung, blood, heart muscle, skeletal muscle, testis and brain.

The protein resides in the nucleus. Transcriptional activator that regulates the tissue specific expression of multiple genes, especially in pancreas and liver. Binds to the hepatocyte specific promoter element HP1. Binds to the inverted palindrome 5'-GTTAATNATTAAC-3'. The sequence is that of Hepatocyte nuclear factor 1-alpha-A (hnf1a-a) from Xenopus laevis (African clawed frog).